Here is a 735-residue protein sequence, read N- to C-terminus: Ribosomal protein S6 kinase alpha-1 (735 aa).

Ser-54 is subject to Phosphoserine. Residues 62–321 (FELLKVLGQG…AEEIKRHVFY (260 aa)) enclose the Protein kinase 1 domain. Residues 68 to 76 (LGQGSFGKV) and Lys-94 each bind ATP. Asp-187 (proton acceptor) is an active-site residue. Residue Ser-221 is modified to Phosphoserine; by PDPK1. At Ser-307 the chain carries Phosphoserine. An AGC-kinase C-terminal domain is found at 322 to 391 (STIDWNKLYR…VATGLMEDDG (70 aa)). Thr-359 is subject to Phosphothreonine. A phosphoserine mark is found at Ser-363 and Ser-369. The residue at position 380 (Ser-380) is a Phosphoserine; by autocatalysis. The region spanning 418-675 (YVVKETIGVG…AKQVLQHPWV (258 aa)) is the Protein kinase 2 domain. Residues 424 to 432 (IGVGSYSEC) and Lys-447 contribute to the ATP site. The Proton acceptor role is filled by Asp-535. Thr-573 is subject to Phosphothreonine. Ser-732 carries the phosphoserine modification.

This sequence belongs to the protein kinase superfamily. AGC Ser/Thr protein kinase family. S6 kinase subfamily. In terms of assembly, forms a complex with either MAPK1/ERK2 or MAPK3/ERK1 in quiescent cells. Transiently dissociates following mitogenic stimulation. Interacts with ETV1/ER81 and FGFR1. (Microbial infection) Interacts with Kaposi's sarcoma-associated herpesvirus/HHV-8 protein ORF45; this interaction allows RPS6KA1 activation. Mg(2+) serves as cofactor. Post-translationally, activated by phosphorylation at Ser-221 by PDPK1. Autophosphorylated on Ser-380, as part of the activation process. May be phosphorylated at Thr-359 and Ser-363 by MAPK1/ERK2 and MAPK3/ERK1. N-terminal myristoylation results in an activated kinase in the absence of added growth factors.

The protein localises to the nucleus. It is found in the cytoplasm. It carries out the reaction L-seryl-[protein] + ATP = O-phospho-L-seryl-[protein] + ADP + H(+). The enzyme catalyses L-threonyl-[protein] + ATP = O-phospho-L-threonyl-[protein] + ADP + H(+). Its activity is regulated as follows. Upon extracellular signal or mitogen stimulation, phosphorylated at Thr-573 in the C-terminal kinase domain (CTKD) by MAPK1/ERK2 and MAPK3/ERK1. The activated CTKD then autophosphorylates Ser-380, allowing binding of PDPK1, which in turn phosphorylates Ser-221 in the N-terminal kinase domain (NTDK) leading to the full activation of the protein and subsequent phosphorylation of the substrates by the NTKD. In terms of biological role, serine/threonine-protein kinase that acts downstream of ERK (MAPK1/ERK2 and MAPK3/ERK1) signaling and mediates mitogenic and stress-induced activation of the transcription factors CREB1, ETV1/ER81 and NR4A1/NUR77, regulates translation through RPS6 and EIF4B phosphorylation, and mediates cellular proliferation, survival, and differentiation by modulating mTOR signaling and repressing pro-apoptotic function of BAD and DAPK1. In fibroblast, is required for EGF-stimulated phosphorylation of CREB1, which results in the subsequent transcriptional activation of several immediate-early genes. In response to mitogenic stimulation (EGF and PMA), phosphorylates and activates NR4A1/NUR77 and ETV1/ER81 transcription factors and the cofactor CREBBP. Upon insulin-derived signal, acts indirectly on the transcription regulation of several genes by phosphorylating GSK3B at 'Ser-9' and inhibiting its activity. Phosphorylates RPS6 in response to serum or EGF via an mTOR-independent mechanism and promotes translation initiation by facilitating assembly of the pre-initiation complex. In response to insulin, phosphorylates EIF4B, enhancing EIF4B affinity for the EIF3 complex and stimulating cap-dependent translation. Is involved in the mTOR nutrient-sensing pathway by directly phosphorylating TSC2 at 'Ser-1798', which potently inhibits TSC2 ability to suppress mTOR signaling, and mediates phosphorylation of RPTOR, which regulates mTORC1 activity and may promote rapamycin-sensitive signaling independently of the PI3K/AKT pathway. Also involved in feedback regulation of mTORC1 and mTORC2 by phosphorylating DEPTOR. Mediates cell survival by phosphorylating the pro-apoptotic proteins BAD and DAPK1 and suppressing their pro-apoptotic function. Promotes the survival of hepatic stellate cells by phosphorylating CEBPB in response to the hepatotoxin carbon tetrachloride (CCl4). Mediates induction of hepatocyte prolifration by TGFA through phosphorylation of CEBPB. Is involved in cell cycle regulation by phosphorylating the CDK inhibitor CDKN1B, which promotes CDKN1B association with 14-3-3 proteins and prevents its translocation to the nucleus and inhibition of G1 progression. Phosphorylates EPHA2 at 'Ser-897', the RPS6KA-EPHA2 signaling pathway controls cell migration. In response to mTORC1 activation, phosphorylates EIF4B at 'Ser-406' and 'Ser-422' which stimulates bicarbonate cotransporter SLC4A7 mRNA translation, increasing SLC4A7 protein abundance and function. Functionally, (Microbial infection) Promotes the late transcription and translation of viral lytic genes during Kaposi's sarcoma-associated herpesvirus/HHV-8 infection, when constitutively activated. The chain is Ribosomal protein S6 kinase alpha-1 (RPS6KA1) from Homo sapiens (Human).